Reading from the N-terminus, the 223-residue chain is Expansin-B6 (223 aa).

Positions 16–124 (GGACGFAVAN…RRVECLYRRT (109 aa)) constitute an Expansin-like EG45 domain. Disulfide bonds link Cys-19-Cys-46, Cys-49-Cys-119, and Cys-54-Cys-60. The 82-residue stretch at 137-218 (YYISFVVEYE…NWKPNETYRS (82 aa)) folds into the Expansin-like CBD domain. A glycan (N-linked (GlcNAc...) asparagine) is linked at Asn-213.

Belongs to the expansin family. Expansin B subfamily.

It is found in the secreted. It localises to the cell wall. Its subcellular location is the membrane. Functionally, may cause loosening and extension of plant cell walls by disrupting non-covalent bonding between cellulose microfibrils and matrix glucans. The protein is Expansin-B6 of Arabidopsis thaliana (Mouse-ear cress).